Consider the following 124-residue polypeptide: Small ribosomal subunit protein uS12 (124 aa).

The interval 1–42 is disordered; that stretch reads MPTIQQLVRKGRRPKVNKTKSPALRGNPQQRGVCSRVYTTTP. A compositionally biased stretch (basic residues) spans 9-18; it reads RKGRRPKVNK. Positions 27–42 are enriched in polar residues; sequence NPQQRGVCSRVYTTTP. 3-methylthioaspartic acid is present on Asp-89.

Belongs to the universal ribosomal protein uS12 family. In terms of assembly, part of the 30S ribosomal subunit. Contacts proteins S8 and S17. May interact with IF1 in the 30S initiation complex.

Functionally, with S4 and S5 plays an important role in translational accuracy. In terms of biological role, interacts with and stabilizes bases of the 16S rRNA that are involved in tRNA selection in the A site and with the mRNA backbone. Located at the interface of the 30S and 50S subunits, it traverses the body of the 30S subunit contacting proteins on the other side and probably holding the rRNA structure together. The combined cluster of proteins S8, S12 and S17 appears to hold together the shoulder and platform of the 30S subunit. In Tropheryma whipplei (strain TW08/27) (Whipple's bacillus), this protein is Small ribosomal subunit protein uS12.